Reading from the N-terminus, the 76-residue chain is Acyl carrier protein (76 aa).

Positions 1–76 (MSLEEKVKNI…DVIEYIKAHT (76 aa)) constitute a Carrier domain. Ser36 is subject to O-(pantetheine 4'-phosphoryl)serine.

The protein belongs to the acyl carrier protein (ACP) family. 4'-phosphopantetheine is transferred from CoA to a specific serine of apo-ACP by AcpS. This modification is essential for activity because fatty acids are bound in thioester linkage to the sulfhydryl of the prosthetic group.

The protein localises to the cytoplasm. It functions in the pathway lipid metabolism; fatty acid biosynthesis. Functionally, carrier of the growing fatty acid chain in fatty acid biosynthesis. The polypeptide is Acyl carrier protein (Desulfatibacillum aliphaticivorans).